We begin with the raw amino-acid sequence, 83 residues long: Weak neurotoxin WNTX33 (83 aa).

The first 21 residues, 1-21, serve as a signal peptide directing secretion; that stretch reads MKTLLLTLVVVTIVCLDLGYS. Disulfide bonds link C24/C45, C38/C62, C64/C75, and C76/C81.

This sequence belongs to the three-finger toxin family. Short-chain subfamily. In terms of tissue distribution, expressed by the venom gland.

It localises to the secreted. This is Weak neurotoxin WNTX33 from Ophiophagus hannah (King cobra).